The sequence spans 1399 residues: DNA-directed RNA polymerase subunit beta' (1399 aa).

Zn(2+)-binding residues include cysteine 70, cysteine 72, cysteine 85, and cysteine 88. Positions 460, 462, and 464 each coordinate Mg(2+). The Zn(2+) site is built by cysteine 814, cysteine 888, cysteine 895, and cysteine 898.

This sequence belongs to the RNA polymerase beta' chain family. In terms of assembly, the RNAP catalytic core consists of 2 alpha, 1 beta, 1 beta' and 1 omega subunit. When a sigma factor is associated with the core the holoenzyme is formed, which can initiate transcription. The cofactor is Mg(2+). Zn(2+) is required as a cofactor.

The enzyme catalyses RNA(n) + a ribonucleoside 5'-triphosphate = RNA(n+1) + diphosphate. Functionally, DNA-dependent RNA polymerase catalyzes the transcription of DNA into RNA using the four ribonucleoside triphosphates as substrates. The chain is DNA-directed RNA polymerase subunit beta' from Pseudomonas putida (strain ATCC 47054 / DSM 6125 / CFBP 8728 / NCIMB 11950 / KT2440).